The following is a 176-amino-acid chain: Adenine phosphoribosyltransferase (176 aa).

It belongs to the purine/pyrimidine phosphoribosyltransferase family. Homodimer.

It localises to the cytoplasm. The enzyme catalyses AMP + diphosphate = 5-phospho-alpha-D-ribose 1-diphosphate + adenine. Its pathway is purine metabolism; AMP biosynthesis via salvage pathway; AMP from adenine: step 1/1. Functionally, catalyzes a salvage reaction resulting in the formation of AMP, that is energically less costly than de novo synthesis. In Borreliella burgdorferi (strain ATCC 35210 / DSM 4680 / CIP 102532 / B31) (Borrelia burgdorferi), this protein is Adenine phosphoribosyltransferase.